The sequence spans 187 residues: Ribonuclease HII (187 aa).

One can recognise an RNase H type-2 domain in the interval 1–187; sequence MIILGIDEAG…YKPVQVLLNE (187 aa). A divalent metal cation is bound by residues aspartate 7, glutamate 8, and aspartate 99.

It belongs to the RNase HII family. Mn(2+) is required as a cofactor. Mg(2+) serves as cofactor.

Its subcellular location is the cytoplasm. The enzyme catalyses Endonucleolytic cleavage to 5'-phosphomonoester.. Functionally, endonuclease that specifically degrades the RNA of RNA-DNA hybrids. In Francisella tularensis subsp. holarctica (strain FTNF002-00 / FTA), this protein is Ribonuclease HII.